A 137-amino-acid chain; its full sequence is Large ribosomal subunit protein uL16 (137 aa).

This sequence belongs to the universal ribosomal protein uL16 family. In terms of assembly, part of the 50S ribosomal subunit.

Binds 23S rRNA and is also seen to make contacts with the A and possibly P site tRNAs. The sequence is that of Large ribosomal subunit protein uL16 from Baumannia cicadellinicola subsp. Homalodisca coagulata.